The following is a 356-amino-acid chain: 1-deoxy-D-xylulose 5-phosphate reductoisomerase (356 aa).

Thr7, Gly8, Ser9, Ile10, Gly31, Asn33, and Asn111 together coordinate NADPH. Residue Lys112 participates in 1-deoxy-D-xylulose 5-phosphate binding. An NADPH-binding site is contributed by Glu113. Asp131 contributes to the Mn(2+) binding site. Ser132, Glu133, Ser155, and His178 together coordinate 1-deoxy-D-xylulose 5-phosphate. A Mn(2+)-binding site is contributed by Glu133. Gly184 contacts NADPH. Residues Ser191, Asn196, Lys197, and Glu200 each contribute to the 1-deoxy-D-xylulose 5-phosphate site. Glu200 contributes to the Mn(2+) binding site.

Belongs to the DXR family. Mg(2+) serves as cofactor. Mn(2+) is required as a cofactor.

It catalyses the reaction 2-C-methyl-D-erythritol 4-phosphate + NADP(+) = 1-deoxy-D-xylulose 5-phosphate + NADPH + H(+). The protein operates within isoprenoid biosynthesis; isopentenyl diphosphate biosynthesis via DXP pathway; isopentenyl diphosphate from 1-deoxy-D-xylulose 5-phosphate: step 1/6. Functionally, catalyzes the NADPH-dependent rearrangement and reduction of 1-deoxy-D-xylulose-5-phosphate (DXP) to 2-C-methyl-D-erythritol 4-phosphate (MEP). The protein is 1-deoxy-D-xylulose 5-phosphate reductoisomerase of Campylobacter jejuni subsp. jejuni serotype O:23/36 (strain 81-176).